The chain runs to 287 residues: GDT1-like protein C17G8.08c (287 aa).

7 helical membrane-spanning segments follow: residues Trp7–Met27, Leu50–Ala70, Ala89–Pro109, Leu112–Ala132, Val194–Glu214, Val232–Ile252, and Met267–Phe287.

The protein belongs to the GDT1 family.

The protein localises to the membrane. This is GDT1-like protein C17G8.08c from Schizosaccharomyces pombe (strain 972 / ATCC 24843) (Fission yeast).